The following is a 901-amino-acid chain: Protein translocase subunit SecA (901 aa).

Residues Q87, 105–109 (GEGKT), and D512 contribute to the ATP site. The disordered stretch occupies residues 852 to 901 (AQMQQLSHQDDDSAAAAALAAQTGDRKVGRNDPCPCGSGKKYKQCHGRLS). Zn(2+) contacts are provided by C885, C887, C896, and H897. Basic residues predominate over residues 891–901 (KKYKQCHGRLS).

It belongs to the SecA family. As to quaternary structure, monomer and homodimer. Part of the essential Sec protein translocation apparatus which comprises SecA, SecYEG and auxiliary proteins SecDF-YajC and YidC. Requires Zn(2+) as cofactor.

The protein localises to the cell inner membrane. Its subcellular location is the cytoplasm. It carries out the reaction ATP + H2O + cellular proteinSide 1 = ADP + phosphate + cellular proteinSide 2.. Part of the Sec protein translocase complex. Interacts with the SecYEG preprotein conducting channel. Has a central role in coupling the hydrolysis of ATP to the transfer of proteins into and across the cell membrane, serving both as a receptor for the preprotein-SecB complex and as an ATP-driven molecular motor driving the stepwise translocation of polypeptide chains across the membrane. This chain is Protein translocase subunit SecA, found in Citrobacter koseri (strain ATCC BAA-895 / CDC 4225-83 / SGSC4696).